The following is an 83-amino-acid chain: Sulfur carrier protein TusA (83 aa).

Residue C20 is the Cysteine persulfide intermediate of the active site.

The protein belongs to the sulfur carrier protein TusA family.

It localises to the cytoplasm. Its function is as follows. Sulfur carrier protein which probably makes part of a sulfur-relay system. This chain is Sulfur carrier protein TusA, found in Pseudomonas fluorescens (strain SBW25).